We begin with the raw amino-acid sequence, 357 residues long: Protein-glutamate methylesterase/protein-glutamine glutaminase (357 aa).

The 118-residue stretch at 3–120 (RVLVVDDSAF…SLDLYKIKEQ (118 aa)) folds into the Response regulatory domain. At Asp-54 the chain carries 4-aspartylphosphate. The CheB-type methylesterase domain occupies 161-355 (PGTGRQIVCI…ASITSCVKKE (195 aa)). Active-site residues include Ser-173, His-200, and Asp-296.

Belongs to the CheB family. Phosphorylated by CheA. Phosphorylation of the N-terminal regulatory domain activates the methylesterase activity.

The protein resides in the cytoplasm. It carries out the reaction [protein]-L-glutamate 5-O-methyl ester + H2O = L-glutamyl-[protein] + methanol + H(+). The catalysed reaction is L-glutaminyl-[protein] + H2O = L-glutamyl-[protein] + NH4(+). Functionally, involved in the modulation of the chemotaxis system; catalyzes the demethylation of specific methylglutamate residues introduced into the chemoreceptors (methyl-accepting chemotaxis proteins) by CheR. B.subtilis has an effective methylation-independent adaptation system but must utilize the methylation system for adaptation to high concentrations of attractant. The polypeptide is Protein-glutamate methylesterase/protein-glutamine glutaminase (Bacillus subtilis (strain 168)).